A 584-amino-acid polypeptide reads, in one-letter code: Segmentation polarity homeobox protein engrailed (584 aa).

Disordered stretches follow at residues 1 to 27, 141 to 198, 343 to 380, 392 to 451, and 465 to 492; these read MALE…PQQH, EESD…SKPS, IGQA…SSST, CSSA…GGKN, and DRPS…PRTA. Residues 12-23 show a composition bias toward pro residues; it reads APSPPGCLPHSP. A compositionally biased stretch (acidic residues) spans 160–174; sequence TEEDEEEDDDIDVDD. Polar residues predominate over residues 189 to 198; sequence HQQSKQSKPS. Low complexity-rich tracts occupy residues 348-380 and 392-405; these read STTP…SSST and CSSA…SPSS. A compositionally biased stretch (basic and acidic residues) spans 478-489; that stretch reads QPKDKTNDEKRP. A DNA-binding region (homeobox) is located at residues 486–545; that stretch reads EKRPRTAFSSEQLARLKREFNENRYLTERRRQQLSSELGLNEAQIKIWFQNKRAKIKKST.

The protein belongs to the engrailed homeobox family.

The protein resides in the nucleus. This protein specifies the body segmentation pattern. It is required for the development of the central nervous system. Transcriptional regulator that repress activated promoters. The protein is Segmentation polarity homeobox protein engrailed (en) of Drosophila virilis (Fruit fly).